The primary structure comprises 268 residues: Tryptophan synthase alpha chain (268 aa).

Residues Glu49 and Asp60 each act as proton acceptor in the active site.

This sequence belongs to the TrpA family. In terms of assembly, tetramer of two alpha and two beta chains.

It carries out the reaction (1S,2R)-1-C-(indol-3-yl)glycerol 3-phosphate + L-serine = D-glyceraldehyde 3-phosphate + L-tryptophan + H2O. It participates in amino-acid biosynthesis; L-tryptophan biosynthesis; L-tryptophan from chorismate: step 5/5. Functionally, the alpha subunit is responsible for the aldol cleavage of indoleglycerol phosphate to indole and glyceraldehyde 3-phosphate. The chain is Tryptophan synthase alpha chain from Haemophilus influenzae (strain PittEE).